A 2197-amino-acid chain; its full sequence is Activating signal cointegrator 1 complex subunit 3 (2197 aa).

At Ser12 the chain carries Phosphoserine. Coiled-coil stretches lie at residues Lys18 to Ile80 and Ile328 to Glu356. The 184-residue stretch at Asp487–Leu670 folds into the Helicase ATP-binding 1 domain. Position 500–507 (Ala500–Thr507) interacts with ATP. At Lys573 the chain carries N6-acetyllysine. A DEVH box motif is present at residues Asp612–His615. A Helicase C-terminal 1 domain is found at Gln697–Val915. An SEC63 1 domain is found at Ser979–Phe1288. The Helicase ATP-binding 2 domain occupies His1337–Phe1512. Residue Ala1350–Thr1357 participates in ATP binding. The DEIH box signature appears at Asp1454–His1457. Positions Arg1565–Ile1739 constitute a Helicase C-terminal 2 domain. In terms of domain architecture, SEC63 2 spans Pro1812–Ile2175.

This sequence belongs to the helicase family. In terms of assembly, identified in the ASCC complex that contains ASCC1, ASCC2 and ASCC3. Functions as a scaffolding subunit that interacts directly with both ASCC1 and ASCC2. Interacts directly with ALKBH3, and thereby recruits ALKBH3 to the ASCC complex. Part of the ASC-1/TRIP4 complex, that contains TRIP4, ASCC1, ASCC2 and ASCC3. Part of the RQT (ribosome quality control trigger) complex, that contains ASCC2, ASCC3 and TRIP4. Associates with ribosomes; recruited to collided ribosomes. Interacts with ZCCHC4. Interacts with ZNF598. Interacts with RPS3.

The protein resides in the nucleus. The protein localises to the nucleus speckle. It is found in the cytoplasm. It localises to the cytosol. It carries out the reaction Couples ATP hydrolysis with the unwinding of duplex DNA by translocating in the 3'-5' direction.. It catalyses the reaction ATP + H2O = ADP + phosphate + H(+). In terms of biological role, ATPase involved both in DNA repair and rescue of stalled ribosomes. 3'-5' DNA helicase involved in repair of alkylated DNA: promotes DNA unwinding to generate single-stranded substrate needed for ALKBH3, enabling ALKBH3 to process alkylated N3-methylcytosine (3mC) within double-stranded regions. Also involved in activation of the ribosome quality control (RQC) pathway, a pathway that degrades nascent peptide chains during problematic translation. Drives the splitting of stalled ribosomes that are ubiquitinated in a ZNF598-dependent manner, as part of the ribosome quality control trigger (RQT) complex. Part of the ASC-1 complex that enhances NF-kappa-B, SRF and AP1 transactivation. The chain is Activating signal cointegrator 1 complex subunit 3 (Ascc3) from Rattus norvegicus (Rat).